We begin with the raw amino-acid sequence, 99 residues long: Nucleoid-associated protein SSA_0326 (99 aa).

Residues 1–15 (MMNMQSMMKQAQKLQ) are compositionally biased toward low complexity. Residues 1 to 23 (MMNMQSMMKQAQKLQKQMEKGQA) are disordered.

Belongs to the YbaB/EbfC family. As to quaternary structure, homodimer.

It localises to the cytoplasm. Its subcellular location is the nucleoid. Functionally, binds to DNA and alters its conformation. May be involved in regulation of gene expression, nucleoid organization and DNA protection. The sequence is that of Nucleoid-associated protein SSA_0326 from Streptococcus sanguinis (strain SK36).